An 83-amino-acid polypeptide reads, in one-letter code: Protein WFDC9 (83 aa).

Positions 1–24 are cleaved as a signal peptide; sequence MKPWIIVLTVSAHGILVFLHVLGS.

It localises to the secreted. This Mus musculus (Mouse) protein is Protein WFDC9 (Wfdc9).